The sequence spans 1340 residues: Iron-sulfur cluster assembly protein SufD (1340 aa).

A compositionally biased stretch (low complexity) spans 477–487 (NSLKHNNNNTK). 5 disordered regions span residues 477–498 (NSLK…ERSS), 723–743 (HGKD…NYLN), 765–794 (NVST…QSTV), 835–865 (EKNE…GEKK), and 992–1055 (NIPT…NNIQ). Residues 723-734 (HGKDNTQHDDKN) are compositionally biased toward basic and acidic residues. Polar residues predominate over residues 782–794 (NPDTETNNEQSTV). Residues 1022–1037 (DNLLQNDQATNSNVEI) are compositionally biased toward polar residues.

The protein belongs to the iron-sulfur cluster assembly SufBD family. Component of a complex composed of SufB, SufC and SufD in a stoichiometric ratio of 1:2:1. Interacts with SufB. Interacts with SufC; the interaction enhances the ATPase activity of SufC.

It localises to the plastid. Its subcellular location is the apicoplast. The protein operates within cofactor biosynthesis; iron-sulfur cluster biosynthesis. Its function is as follows. Participates in the sulfur mobilization (SUF) pathway for iron-sulfur (Fe-S) cluster biogenesis. As part of a complex consisting of SufB-SufC(2)-SufD, involved in assembly of [4Fe-4S] clusters. Enhances the ATPase activity of SufC. This Plasmodium berghei (strain Anka) protein is Iron-sulfur cluster assembly protein SufD.